A 332-amino-acid polypeptide reads, in one-letter code: Tetraacyldisaccharide 4'-kinase (332 aa).

Residue Thr-60 to Thr-67 coordinates ATP.

It belongs to the LpxK family.

It catalyses the reaction a lipid A disaccharide + ATP = a lipid IVA + ADP + H(+). It participates in glycolipid biosynthesis; lipid IV(A) biosynthesis; lipid IV(A) from (3R)-3-hydroxytetradecanoyl-[acyl-carrier-protein] and UDP-N-acetyl-alpha-D-glucosamine: step 6/6. Its function is as follows. Transfers the gamma-phosphate of ATP to the 4'-position of a tetraacyldisaccharide 1-phosphate intermediate (termed DS-1-P) to form tetraacyldisaccharide 1,4'-bis-phosphate (lipid IVA). This Pseudomonas paraeruginosa (strain DSM 24068 / PA7) (Pseudomonas aeruginosa (strain PA7)) protein is Tetraacyldisaccharide 4'-kinase.